Here is a 533-residue protein sequence, read N- to C-terminus: MFCNQCEQTAKGQGCTVKGVCGKTDEVSAIQDLLVQVLVELGTVATAARKEGIAVSNEVNRLTAEGVFSTLTNVNFDDERFVPVIKNVAAARDELAAKVSADCGKLTKVAGTAAELSKQGEAFPVTSFDENEDLRSLKQILVYGLKGVAAYTDHAAILGQEDDELYAQIHEALSVVPQQLGMEELVGWAMKCGEMNLKAMELLDAGNTGAYGHPVPTEVPLGAKAGKAILVSGHDLKDLRQLLEQTEGTGINIYTHGEMLPCHGYPELKKFDHFYGHYGTAWQNQAKEFAQFPGAILMTTNCIQKPVESYKGNIYTTGLVGWPGVTHVTNGDFAEVIAKAQELPGFEADTDNGKVLCGFARNTVLGVADKVIEGVKAGAIKHFFLVGGCDGAKPGRNYYTDFVEQAPQDTVILTLACGKFRFFDKQLGDIGGIPRLLDIGQCNDAYSAIQIAVALANAFECGVNDLPLSMVLSWYEQKAVSILLTLLHLGIKDIRLGPSLPAFVTPNVLNFLVENFNIMPISTPEEDLKAILG.

Residues Cys-3, Cys-6, Cys-15, and Cys-21 each contribute to the [4Fe-4S] cluster site. Hybrid [4Fe-2O-2S] cluster is bound by residues His-234, Glu-258, Cys-302, Cys-389, Cys-417, Cys-442, Glu-476, and Lys-478. Cys-389 bears the Cysteine persulfide mark.

This sequence belongs to the HCP family. Requires [4Fe-4S] cluster as cofactor. Hybrid [4Fe-2O-2S] cluster is required as a cofactor.

It localises to the cytoplasm. The catalysed reaction is A + NH4(+) + H2O = hydroxylamine + AH2 + H(+). Catalyzes the reduction of hydroxylamine to form NH(3) and H(2)O. The chain is Hydroxylamine reductase from Maridesulfovibrio salexigens (strain ATCC 14822 / DSM 2638 / NCIMB 8403 / VKM B-1763) (Desulfovibrio salexigens).